Consider the following 228-residue polypeptide: L-ribulose-5-phosphate 4-epimerase UlaF (228 aa).

Substrate contacts are provided by residues 26-27, 43-44, and 72-73; these read GN, SG, and SS. Zn(2+)-binding residues include aspartate 74, histidine 93, and histidine 95. Residue aspartate 118 is the Proton donor/acceptor of the active site. Histidine 167 contributes to the Zn(2+) binding site. Tyrosine 225 functions as the Proton donor/acceptor in the catalytic mechanism.

It belongs to the aldolase class II family. AraD/FucA subfamily. Zn(2+) is required as a cofactor.

The enzyme catalyses L-ribulose 5-phosphate = D-xylulose 5-phosphate. The protein operates within cofactor degradation; L-ascorbate degradation; D-xylulose 5-phosphate from L-ascorbate: step 4/4. Catalyzes the isomerization of L-ribulose 5-phosphate to D-xylulose 5-phosphate. Is involved in the anaerobic L-ascorbate utilization. This is L-ribulose-5-phosphate 4-epimerase UlaF from Shigella dysenteriae serotype 1 (strain Sd197).